The primary structure comprises 372 residues: Glutamate 5-kinase (372 aa).

K14 is a binding site for ATP. 3 residues coordinate substrate: S54, D141, and N153. ATP-binding positions include T173 to D174 and T215 to K221. Residues R280–D358 enclose the PUA domain.

The protein belongs to the glutamate 5-kinase family.

It localises to the cytoplasm. The enzyme catalyses L-glutamate + ATP = L-glutamyl 5-phosphate + ADP. It functions in the pathway amino-acid biosynthesis; L-proline biosynthesis; L-glutamate 5-semialdehyde from L-glutamate: step 1/2. Catalyzes the transfer of a phosphate group to glutamate to form L-glutamate 5-phosphate. This is Glutamate 5-kinase from Shewanella pealeana (strain ATCC 700345 / ANG-SQ1).